The following is a 479-amino-acid chain: Endosomal/lysosomal proton channel TMEM175 (479 aa).

The segment at Met1–Ala26 is disordered. The Cytoplasmic segment spans residues Met1–Ser33. A helical membrane pass occupies residues His34–Ser56. The RxxxFSD motif 1 signature appears at Arg35 to Asp41. The segment at Glu52–Gln58 is short helix H2-1. Over Val57–Arg64 the chain is Lumenal. A helical membrane pass occupies residues Ile65 to Gln87. At Val88–Asp93 the chain is on the cytoplasmic side. Residues Asp94–Ser103 traverse the membrane as a helical segment. The Lumenal portion of the chain corresponds to Leu104–Leu113. The chain crosses the membrane as a helical span at residues Gly114–Tyr135. Over Ala136–Arg159 the chain is Cytoplasmic. The helical transmembrane segment at Val160–Phe180 threads the bilayer. At Phe181 to Ser185 the chain is on the lumenal side. A helical transmembrane segment spans residues Tyr186–Cys205. The Cytoplasmic portion of the chain corresponds to Arg206–Ser232. A helical membrane pass occupies residues Lys233–Glu257. Residues Arg235–Asp241 carry the RxxxFSD motif 2 motif. Topologically, residues Asp258–His284 are lumenal. A short helix H1-2 region spans residues Ala263–Gln271. Positions Ser273–Gly279 are short helix H2-2. A helical membrane pass occupies residues Phe285–Leu307. Residues His308–Thr313 lie on the Cytoplasmic side of the membrane. Residues Gln314–Gln335 traverse the membrane as a helical segment. Residues Gln336–Ser350 are Lumenal-facing. Residues Val351 to Thr371 form a helical membrane-spanning segment. The Cytoplasmic segment spans residues Ala372–His391. A helical membrane pass occupies residues Ala392–Leu415. Topologically, residues Ser416 to Ser417 are lumenal. Residues Phe418–Ala444 traverse the membrane as a helical segment. Residues Leu445–Cys479 lie on the Cytoplasmic side of the membrane.

Belongs to the TMEM175 family. Homodimer. Interacts with AKT (AKT1, AKT2 or AKT3); leading to formation of the lysoK(GF) complex, which activates the channel. Interacts with LAMP1; inhibiting the proton channel activity of TMEM175. Interacts with LAMP2; inhibiting the proton channel activity of TMEM175.

The protein localises to the endosome membrane. It is found in the lysosome membrane. The enzyme catalyses H(+)(in) = H(+)(out). The catalysed reaction is K(+)(in) = K(+)(out). Its activity is regulated as follows. Active at low pH (under pH 4.6): proton channel activity is activated by luminal side protons. Polyunsaturated fatty acids, such as arachidonic acid, also activate the channel activity. Proton channel activity is directly inhibited by LAMP1 or LAMP2, facilitating lysosomal acidification. Channel activity is activated following interaction with AKT (AKT1, AKT2 or AKT3): interaction promotes activation from closed to an open state. Activation by AKT is independent of AKT serine/threonine-protein kinase activity. Its function is as follows. Proton-activated proton channel that catalyzes proton efflux from endosomes and lysosomes to maintain a steady-state pH. Activated at low pH (under pH 4.6) by luminal side protons: selectively mediates lysosomal proton release from lysosomes, eliciting a proton leak that balances V-ATPase activity to maintain pH homeostasis. Regulation of lumenal pH stability is required for autophagosome-lysosome fusion. Also acts as a potassium channel at higher pH, regulating potassium conductance in endosomes and lysosomes. Constitutes the pore-forming subunit of the lysoK(GF) complex, a complex activated by extracellular growth factors. The lysoK(GF) complex is composed of TMEM175 and AKT (AKT1, AKT2 or AKT3), a major target of growth factor receptors: in the complex, TMEM175 channel is opened by conformational changes by AKT, leading to its activation. The lysoK(GF) complex is required to protect neurons against stress-induced damage. In Bos taurus (Bovine), this protein is Endosomal/lysosomal proton channel TMEM175.